We begin with the raw amino-acid sequence, 182 residues long: MSTQDLEASMRKSVEATQRNFNTIRTGRANSSLLDRISVEYYGAETPLKSLATLSTPDSQTIQIQPFDISALASIEKAIAMSELGFTPNNDGKIIRINVPPLTEERRKEFCKLASKYAEEGKVALRNLRRDAIDKIKKQEKEGEFSEDQSRDEQDGVQKTLDKFIAELEKHLASKEADILKV.

It belongs to the RRF family.

The protein resides in the cytoplasm. Functionally, responsible for the release of ribosomes from messenger RNA at the termination of protein biosynthesis. May increase the efficiency of translation by recycling ribosomes from one round of translation to another. This chain is Ribosome-recycling factor, found in Synechococcus sp. (strain CC9605).